Reading from the N-terminus, the 274-residue chain is Cell division protein FtsQ (274 aa).

Positions 1–24 (MRDLHAKKQRVPHNRVKKPPKERK) are disordered. Over 1–33 (MRDLHAKKQRVPHNRVKKPPKERKPINWGPILK) the chain is Cytoplasmic. Residues 7-21 (KKQRVPHNRVKKPPK) are compositionally biased toward basic residues. The chain crosses the membrane as a helical span at residues 34 to 56 (FASRGFGGAALCAGLGFGGWQLY). Topologically, residues 57-274 (NLVSRTTLLR…YADKIIVKKV (218 aa)) are periplasmic. The region spanning 65–133 (LRLEAIEVSP…HTLSITVSER (69 aa)) is the POTRA domain.

It belongs to the FtsQ/DivIB family. FtsQ subfamily.

Its subcellular location is the cell inner membrane. Its function is as follows. Essential cell division protein. This chain is Cell division protein FtsQ, found in Geobacter sp. (strain M21).